A 352-amino-acid chain; its full sequence is Photosystem II D2 protein (352 aa).

Threonine 2 bears the N-acetylthreonine mark. Threonine 2 is modified (phosphothreonine). The helical transmembrane segment at 40-60 (CAYFALGGWLTGTTFVTSWYT) threads the bilayer. Histidine 117 is a chlorophyll a binding site. The helical transmembrane segment at 124–140 (GFMLRQFEIARSVNLRP) threads the bilayer. 2 residues coordinate pheophytin a: glutamine 129 and asparagine 142. The chain crosses the membrane as a helical span at residues 152-165 (VFVSVFLIYPLGQS). Position 197 (histidine 197) interacts with chlorophyll a. The helical transmembrane segment at 207 to 227 (AALLCAIHGATVENTLFEDGD) threads the bilayer. 2 residues coordinate a plastoquinone: histidine 214 and phenylalanine 261. Histidine 214 contributes to the Fe cation binding site. A Fe cation-binding site is contributed by histidine 268. Residues 278–294 (GLWMSAIGVVGLALNLR) form a helical membrane-spanning segment.

The protein belongs to the reaction center PufL/M/PsbA/D family. In terms of assembly, PSII is composed of 1 copy each of membrane proteins PsbA, PsbB, PsbC, PsbD, PsbE, PsbF, PsbH, PsbI, PsbJ, PsbK, PsbL, PsbM, PsbT, PsbX, PsbY, PsbZ, Psb30/Ycf12, at least 3 peripheral proteins of the oxygen-evolving complex and a large number of cofactors. It forms dimeric complexes. It depends on The D1/D2 heterodimer binds P680, chlorophylls that are the primary electron donor of PSII, and subsequent electron acceptors. It shares a non-heme iron and each subunit binds pheophytin, quinone, additional chlorophylls, carotenoids and lipids. There is also a Cl(-1) ion associated with D1 and D2, which is required for oxygen evolution. The PSII complex binds additional chlorophylls, carotenoids and specific lipids. as a cofactor. Post-translationally, phosphorylated in vitro.

The protein resides in the plastid. Its subcellular location is the chloroplast thylakoid membrane. It carries out the reaction 2 a plastoquinone + 4 hnu + 2 H2O = 2 a plastoquinol + O2. Functionally, photosystem II (PSII) is a light-driven water:plastoquinone oxidoreductase that uses light energy to abstract electrons from H(2)O, generating O(2) and a proton gradient subsequently used for ATP formation. It consists of a core antenna complex that captures photons, and an electron transfer chain that converts photonic excitation into a charge separation. The D1/D2 (PsbA/PsbD) reaction center heterodimer binds P680, the primary electron donor of PSII as well as several subsequent electron acceptors. D2 is needed for assembly of a stable PSII complex. In Chlamydomonas reinhardtii (Chlamydomonas smithii), this protein is Photosystem II D2 protein.